The sequence spans 137 residues: ATP synthase epsilon chain (137 aa).

Belongs to the ATPase epsilon chain family. As to quaternary structure, F-type ATPases have 2 components, CF(1) - the catalytic core - and CF(0) - the membrane proton channel. CF(1) has five subunits: alpha(3), beta(3), gamma(1), delta(1), epsilon(1). CF(0) has three main subunits: a, b and c.

It is found in the cellular thylakoid membrane. Functionally, produces ATP from ADP in the presence of a proton gradient across the membrane. This Synechococcus sp. (strain JA-2-3B'a(2-13)) (Cyanobacteria bacterium Yellowstone B-Prime) protein is ATP synthase epsilon chain.